We begin with the raw amino-acid sequence, 194 residues long: MAIGSKIIKPGGSDPDDFEKSIAQALVELEANSDLKPYLRDLHITRAREIEFGSKKAVIIYVPIPQQKVFQKIQIILVRELEKKFSGKHVVVIAERKILPKPTRKARNPLKQKRPRSRTLTAVYDAILEDLVFPAEIVGKRIRVKLDGSQLVKVHLDKNQQTTIEHKVDTFTSVYKKLTGRDVTFEFPDNYLNV.

This sequence belongs to the eukaryotic ribosomal protein eS7 family.

This chain is Small ribosomal subunit protein eS7 (RpS7), found in Drosophila melanogaster (Fruit fly).